The following is a 300-amino-acid chain: UDP-3-O-acyl-N-acetylglucosamine deacetylase (300 aa).

Zn(2+) contacts are provided by His-78, His-237, and Asp-241. His-264 (proton donor) is an active-site residue.

This sequence belongs to the LpxC family. Zn(2+) is required as a cofactor.

The catalysed reaction is a UDP-3-O-[(3R)-3-hydroxyacyl]-N-acetyl-alpha-D-glucosamine + H2O = a UDP-3-O-[(3R)-3-hydroxyacyl]-alpha-D-glucosamine + acetate. Its pathway is glycolipid biosynthesis; lipid IV(A) biosynthesis; lipid IV(A) from (3R)-3-hydroxytetradecanoyl-[acyl-carrier-protein] and UDP-N-acetyl-alpha-D-glucosamine: step 2/6. In terms of biological role, catalyzes the hydrolysis of UDP-3-O-myristoyl-N-acetylglucosamine to form UDP-3-O-myristoylglucosamine and acetate, the committed step in lipid A biosynthesis. In Acinetobacter baumannii (strain SDF), this protein is UDP-3-O-acyl-N-acetylglucosamine deacetylase.